A 408-amino-acid chain; its full sequence is Biphenyl dioxygenase system ferredoxin--NAD(+) reductase component (408 aa).

4–35 (TIAIIGAGLAGSTAARALRAQGYEGRIHLLGD) is an FAD binding site. 145-173 (SLVIVGGGLIGCEVATTARKLSVHVTILE) is an NAD(+) binding site.

It belongs to the bacterial ring-hydroxylating dioxygenase ferredoxin reductase family. As to quaternary structure, this dioxygenase system consists of four proteins: the two subunits of the hydroxylase component (BphA and BphE), a ferredoxin (BphF) and a ferredoxin reductase (BphG). Requires FAD as cofactor.

It catalyses the reaction 2 reduced [2Fe-2S]-[ferredoxin] + NAD(+) + H(+) = 2 oxidized [2Fe-2S]-[ferredoxin] + NADH. It functions in the pathway xenobiotic degradation; biphenyl degradation. Functionally, part of the electron transfer component of biphenyl dioxygenase, transfers electrons from ferredoxin (BphF) to NADH. This Paraburkholderia xenovorans (strain LB400) protein is Biphenyl dioxygenase system ferredoxin--NAD(+) reductase component (bphG).